The chain runs to 530 residues: Ankyrin repeat domain-containing protein 53 (530 aa).

The span at 1 to 15 (MASAGSTARRAGSGS) shows a compositional bias: low complexity. The interval 1–99 (MASAGSTARR…PSPSKESDQT (99 aa)) is disordered. Over residues 32 to 41 (PSGSMQQANK) the composition is skewed to polar residues. ANK repeat units lie at residues 139-169 (KGFT…PVDL), 173-206 (NSQT…DLNA), and 210-239 (NGST…NVHA). 2 disordered regions span residues 323–360 (GHSL…VDAR) and 383–402 (PTMW…QISH). Polar residues-rich tracts occupy residues 326–341 (LVSN…LSKT) and 386–402 (WNVS…QISH).

In terms of assembly, interacts with PSRC1; recruited by PSRC1 to the spindle during mitosis. Post-translationally, phosphorylated during mitosis.

It localises to the cytoplasm. The protein localises to the cytoskeleton. It is found in the spindle. Its subcellular location is the spindle pole. Required for normal progression through mitosis. Involved in chromosome alignment and cytokinesis via regulation of microtubules polymerization. This is Ankyrin repeat domain-containing protein 53 (ANKRD53) from Homo sapiens (Human).